Reading from the N-terminus, the 117-residue chain is Probable non-functional immunoglobulin heavy variable 7-81 (117 aa).

The first 19 residues, 1–19 (MDWTWSILFLVAAATGTYS), serve as a signal peptide directing secretion. Residues 20 to 44 (QVQLVQSGHEVKQPGASVKVSCKAS) form a framework-1 region. In terms of domain architecture, Ig-like spans 20–117 (QVQLVQSGHE…EDMAMYYCAR (98 aa)). Residues cysteine 41 and cysteine 115 are joined by a disulfide bond. The segment at 45–52 (GYSFTTYG) is complementarity-determining-1. The tract at residues 53-69 (MNWVPQAPGQGLEWMGW) is framework-2. Residues 70–77 (FNTYTGNP) are complementarity-determining-2. Asparagine 76 carries N-linked (GlcNAc...) asparagine glycosylation. The segment at 78–115 (TYAQGFTGRFVFSMDTSASTAYLQISSLKAEDMAMYYC) is framework-3. Residues 116–117 (AR) are complementarity-determining-3.

As to quaternary structure, immunoglobulins are composed of two identical heavy chains and two identical light chains; disulfide-linked.

The protein resides in the secreted. It is found in the cell membrane. Functionally, probable non-functional open reading frame (ORF) of V region of the variable domain of immunoglobulin heavy chains. Non-functional ORF generally cannot participate in the synthesis of a productive immunoglobulin chain due to altered V-(D)-J or switch recombination and/or splicing site (at mRNA level) and/or conserved amino acid change (protein level). Immunoglobulins, also known as antibodies, are membrane-bound or secreted glycoproteins produced by B lymphocytes. In the recognition phase of humoral immunity, the membrane-bound immunoglobulins serve as receptors which, upon binding of a specific antigen, trigger the clonal expansion and differentiation of B lymphocytes into immunoglobulins-secreting plasma cells. Secreted immunoglobulins mediate the effector phase of humoral immunity, which results in the elimination of bound antigens. The antigen binding site is formed by the variable domain of one heavy chain, together with that of its associated light chain. Thus, each immunoglobulin has two antigen binding sites with remarkable affinity for a particular antigen. The variable domains are assembled by a process called V-(D)-J rearrangement and can then be subjected to somatic hypermutations which, after exposure to antigen and selection, allow affinity maturation for a particular antigen. The polypeptide is Probable non-functional immunoglobulin heavy variable 7-81 (Homo sapiens (Human)).